A 160-amino-acid chain; its full sequence is MSAPRKTRLYAILAVICGAVLTVALTLYALSSNIDLFYTPSEILYGKNETQEKPAIGQRLRVGGMVMPGSVRRDSQSLEVRFTVYDAQGSVEVTYNGMLPDLFREGQGVVAQGILDTDDHIMAKEVLARHDENYTPPEIKAAMEGQHGHAPAAVTEGKRL.

Residues 1-8 (MSAPRKTR) lie on the Cytoplasmic side of the membrane. The helical; Signal-anchor for type II membrane protein transmembrane segment at 9 to 29 (LYAILAVICGAVLTVALTLYA) threads the bilayer. Residues 30–160 (LSSNIDLFYT…PAAVTEGKRL (131 aa)) lie on the Periplasmic side of the membrane. Heme is bound by residues His-130 and Tyr-134.

It belongs to the CcmE/CycJ family.

Its subcellular location is the cell inner membrane. Heme chaperone required for the biogenesis of c-type cytochromes. Transiently binds heme delivered by CcmC and transfers the heme to apo-cytochromes in a process facilitated by CcmF and CcmH. The polypeptide is Cytochrome c-type biogenesis protein CcmE (Pectobacterium carotovorum subsp. carotovorum (strain PC1)).